The following is a 401-amino-acid chain: Phosphoglycerate kinase, cytosolic (401 aa).

Residues alanine 24, aspartate 25, asparagine 27, arginine 41, serine 63, histidine 64, glycine 66, arginine 67, arginine 122, histidine 154, and arginine 155 each contribute to the (2R)-3-phosphoglycerate site. Glycine 200 contributes to the ADP binding site. Residue glycine 200 participates in CDP binding. AMP contacts are provided by lysine 202 and lysine 206. Position 206 (lysine 206) interacts with ATP. Position 224 (glycine 224) interacts with ADP. Glycine 224 contributes to the CDP binding site. Glycine 225 and glycine 297 together coordinate AMP. Residues glycine 225 and glycine 297 each contribute to the ATP site. 2 residues coordinate CDP: glycine 322 and phenylalanine 327. ADP is bound at residue phenylalanine 327. Glutamate 328 provides a ligand contact to AMP. The ATP site is built by glutamate 328, aspartate 359, and serine 360. Position 359 (aspartate 359) interacts with Mg(2+).

This sequence belongs to the phosphoglycerate kinase family. As to quaternary structure, monomer. Mg(2+) is required as a cofactor.

It is found in the cytoplasm. The catalysed reaction is (2R)-3-phosphoglycerate + ATP = (2R)-3-phospho-glyceroyl phosphate + ADP. Its pathway is carbohydrate degradation; glycolysis; pyruvate from D-glyceraldehyde 3-phosphate: step 2/5. The protein is Phosphoglycerate kinase, cytosolic of Triticum aestivum (Wheat).